We begin with the raw amino-acid sequence, 98 residues long: Phosphoribosyl-ATP pyrophosphatase (98 aa).

This sequence belongs to the PRA-PH family.

The protein resides in the cytoplasm. The enzyme catalyses 1-(5-phospho-beta-D-ribosyl)-ATP + H2O = 1-(5-phospho-beta-D-ribosyl)-5'-AMP + diphosphate + H(+). The protein operates within amino-acid biosynthesis; L-histidine biosynthesis; L-histidine from 5-phospho-alpha-D-ribose 1-diphosphate: step 2/9. The protein is Phosphoribosyl-ATP pyrophosphatase of Haloarcula marismortui (strain ATCC 43049 / DSM 3752 / JCM 8966 / VKM B-1809) (Halobacterium marismortui).